We begin with the raw amino-acid sequence, 1868 residues long: Protein TIC 214 (1868 aa).

A run of 6 helical transmembrane segments spans residues 11-31 (LLLL…YYGF), 64-84 (FIMG…HLAL), 87-107 (PHTL…FFWN), 126-146 (LSIQ…HFIL), 166-186 (ILFV…LMKS), and 221-241 (IFSI…PSPI). Residues 248 to 276 (ESSKGEEKKKTEKERDVEMETISKTKKIE) show a composition bias toward basic and acidic residues. Disordered stretches follow at residues 248–277 (ESSK…KIEQ), 617–643 (FDFE…GIRS), 658–700 (DEDT…QAEE), 782–806 (TSDY…KRKE), and 1537–1607 (YIDP…RKKK). The segment covering 617-636 (FDFEEEEEEEEEEDDEEEPT) has biased composition (acidic residues). Over residues 674-683 (AKNSDQAKNS) the composition is skewed to polar residues. Basic and acidic residues-rich tracts occupy residues 684–700 (DQAK…QAEE), 789–806 (GAKE…KRKE), and 1537–1576 (YIDP…ERQH).

The protein belongs to the TIC214 family. Part of the Tic complex.

The protein localises to the plastid. The protein resides in the chloroplast inner membrane. In terms of biological role, involved in protein precursor import into chloroplasts. May be part of an intermediate translocation complex acting as a protein-conducting channel at the inner envelope. This chain is Protein TIC 214, found in Nuphar advena (Common spatterdock).